A 375-amino-acid chain; its full sequence is Growth/differentiation factor 8 (375 aa).

The N-terminal stretch at 1–18 (MQKLQIFVYIYLFMLLVA) is a signal peptide. The propeptide occupies 19-266 (GPVDLNENSE…VTDTPKRSRR (248 aa)). N-linked (GlcNAc...) asparagine glycosylation is found at asparagine 48 and asparagine 71. 4 disulfides stabilise this stretch: cysteine 272–cysteine 282, cysteine 281–cysteine 340, cysteine 309–cysteine 372, and cysteine 313–cysteine 374.

It belongs to the TGF-beta family. As to quaternary structure, homodimer; disulfide-linked. Interacts with WFIKKN2, leading to inhibit its activity. Interacts with FSTL3. In terms of processing, synthesized as large precursor molecule that undergoes proteolytic cleavage to generate an N-terminal propeptide and a disulfide linked C-terminal dimer, which is the biologically active molecule. The circulating form consists of a latent complex of the C-terminal dimer and other proteins, including its propeptide, which maintain the C-terminal dimer in a latent, inactive state. Ligand activation requires additional cleavage of the prodomain by a tolloid-like metalloproteinase.

The protein resides in the secreted. Its function is as follows. Acts specifically as a negative regulator of skeletal muscle growth. This Capra ibex (Ibex) protein is Growth/differentiation factor 8 (MSTN).